The following is a 356-amino-acid chain: Putative ankyrin repeat protein R599 (356 aa).

ANK repeat units lie at residues 111-143 (NDDI…FCDN), 152-182 (RLEK…NVNT), 183-213 (HNYE…KLSD), 215-238 (KRKI…ELEV), 239-266 (NFDD…GANI), and 267-298 (NSIP…DINN).

This Acanthamoeba polyphaga (Amoeba) protein is Putative ankyrin repeat protein R599.